The following is a 243-amino-acid chain: 2-C-methyl-D-erythritol 4-phosphate cytidylyltransferase (243 aa).

The protein belongs to the IspD/TarI cytidylyltransferase family. IspD subfamily.

The catalysed reaction is 2-C-methyl-D-erythritol 4-phosphate + CTP + H(+) = 4-CDP-2-C-methyl-D-erythritol + diphosphate. The protein operates within isoprenoid biosynthesis; isopentenyl diphosphate biosynthesis via DXP pathway; isopentenyl diphosphate from 1-deoxy-D-xylulose 5-phosphate: step 2/6. Functionally, catalyzes the formation of 4-diphosphocytidyl-2-C-methyl-D-erythritol from CTP and 2-C-methyl-D-erythritol 4-phosphate (MEP). In Aeromonas hydrophila subsp. hydrophila (strain ATCC 7966 / DSM 30187 / BCRC 13018 / CCUG 14551 / JCM 1027 / KCTC 2358 / NCIMB 9240 / NCTC 8049), this protein is 2-C-methyl-D-erythritol 4-phosphate cytidylyltransferase.